Reading from the N-terminus, the 146-residue chain is L-fucose mutarotase (146 aa).

Catalysis depends on His-22, which acts as the Proton donor. Substrate contacts are provided by residues Asp-30, Arg-109, and 131 to 133 (YGN).

The protein belongs to the RbsD / FucU family. FucU mutarotase subfamily. In terms of assembly, homodecamer.

The protein resides in the cytoplasm. The enzyme catalyses alpha-L-fucose = beta-L-fucose. Its pathway is carbohydrate metabolism; L-fucose metabolism. Its function is as follows. Involved in the anomeric conversion of L-fucose. The protein is L-fucose mutarotase of Glaesserella parasuis serovar 5 (strain SH0165) (Haemophilus parasuis).